The primary structure comprises 492 residues: GTPase Obg (492 aa).

An Obg domain is found at 2–159 (PRFVDRVVIH…RELTLELKTV (158 aa)). Positions 160–340 (ADVGLIGFPS…LIFGLWQMIS (181 aa)) constitute an OBG-type G domain. GTP is bound by residues 166–173 (GFPSAGKS), 191–195 (FTTLV), 212–215 (DVPG), 292–295 (NKID), and 321–323 (STV). Residues Ser173 and Thr193 each coordinate Mg(2+). Residues 358–438 (PVPVDDSGFR…IGDMTFDWEP (81 aa)) form the OCT domain. The disordered stretch occupies residues 449–492 (SGRGTDARLERTERVGAAERKAARRQRRTGDDAERGTTERGENT). 2 stretches are compositionally biased toward basic and acidic residues: residues 453 to 469 (TDAR…AERK) and 476 to 492 (RTGD…GENT).

Belongs to the TRAFAC class OBG-HflX-like GTPase superfamily. OBG GTPase family. Monomer. The cofactor is Mg(2+).

Its subcellular location is the cytoplasm. An essential GTPase which binds GTP, GDP and possibly (p)ppGpp with moderate affinity, with high nucleotide exchange rates and a fairly low GTP hydrolysis rate. Plays a role in control of the cell cycle, stress response, ribosome biogenesis and in those bacteria that undergo differentiation, in morphogenesis control. This Mycobacterium avium (strain 104) protein is GTPase Obg.